The primary structure comprises 298 residues: UDP-3-O-acyl-N-acetylglucosamine deacetylase (298 aa).

Residues H75, H232, and D236 each coordinate Zn(2+). The Proton donor role is filled by H259.

Belongs to the LpxC family. It depends on Zn(2+) as a cofactor.

It carries out the reaction a UDP-3-O-[(3R)-3-hydroxyacyl]-N-acetyl-alpha-D-glucosamine + H2O = a UDP-3-O-[(3R)-3-hydroxyacyl]-alpha-D-glucosamine + acetate. Its pathway is glycolipid biosynthesis; lipid IV(A) biosynthesis; lipid IV(A) from (3R)-3-hydroxytetradecanoyl-[acyl-carrier-protein] and UDP-N-acetyl-alpha-D-glucosamine: step 2/6. Catalyzes the hydrolysis of UDP-3-O-myristoyl-N-acetylglucosamine to form UDP-3-O-myristoylglucosamine and acetate, the committed step in lipid A biosynthesis. This chain is UDP-3-O-acyl-N-acetylglucosamine deacetylase, found in Nitratiruptor sp. (strain SB155-2).